Here is a 465-residue protein sequence, read N- to C-terminus: MDFLPLFHSLQGRLALVVGGGEVALRKARLLADAGARLRVVAPQIHIELRHLVEQGGGELLERDYQDGDQPGCALIIAATDDEPLNAEVSRAANARGIPVNVVDAPALCSVIFPAIVDRSPLVVAVSSGGDAPVLARLIRAKLETWIPSTYGQLAGLASRFRHRVKELLPDLQQRRVFWENLFQGEIAERVLAGRPAEAERLLEEHLAGGLAHIATGEVYLVGAGPGDPDLLTFRALRLMQQADVVLYDRLVAPSILELCRRDAERLYVGKRRAEHAVPQDRINRLLVELASQGKRVLRLKGGDPFIFGRGGEEIDELAAHGIPFQVVPGITAASGCAAYAGIPLTHRDHAQSVRFVTGHLKDGTTDLPWQDLVAPGQTLVFYMGLVGLPVICEQLVAHGRSAQTPAALIQQGTTAQQRVFTGTLENLPQLVAEHEVHAPTLVIVGEVVQLRDKLAWFEGAREDA.

Residues 1-203 (MDFLPLFHSL…GRPAEAERLL (203 aa)) are precorrin-2 dehydrogenase /sirohydrochlorin ferrochelatase. NAD(+)-binding positions include 22–23 (EV) and 43–44 (PQ). Phosphoserine is present on Ser-128. Residues 217 to 465 (GEVYLVGAGP…AWFEGAREDA (249 aa)) form a uroporphyrinogen-III C-methyltransferase region. Position 226 (Pro-226) interacts with S-adenosyl-L-methionine. The Proton acceptor role is filled by Asp-249. The active-site Proton donor is the Lys-271. S-adenosyl-L-methionine contacts are provided by residues 302–304 (GGD), Ile-307, 332–333 (TA), Met-384, and Gly-413.

This sequence in the N-terminal section; belongs to the precorrin-2 dehydrogenase / sirohydrochlorin ferrochelatase family. In the C-terminal section; belongs to the precorrin methyltransferase family.

The catalysed reaction is uroporphyrinogen III + 2 S-adenosyl-L-methionine = precorrin-2 + 2 S-adenosyl-L-homocysteine + H(+). It carries out the reaction precorrin-2 + NAD(+) = sirohydrochlorin + NADH + 2 H(+). The enzyme catalyses siroheme + 2 H(+) = sirohydrochlorin + Fe(2+). It participates in cofactor biosynthesis; adenosylcobalamin biosynthesis; precorrin-2 from uroporphyrinogen III: step 1/1. The protein operates within cofactor biosynthesis; adenosylcobalamin biosynthesis; sirohydrochlorin from precorrin-2: step 1/1. It functions in the pathway porphyrin-containing compound metabolism; siroheme biosynthesis; precorrin-2 from uroporphyrinogen III: step 1/1. Its pathway is porphyrin-containing compound metabolism; siroheme biosynthesis; siroheme from sirohydrochlorin: step 1/1. It participates in porphyrin-containing compound metabolism; siroheme biosynthesis; sirohydrochlorin from precorrin-2: step 1/1. In terms of biological role, multifunctional enzyme that catalyzes the SAM-dependent methylations of uroporphyrinogen III at position C-2 and C-7 to form precorrin-2 via precorrin-1. Then it catalyzes the NAD-dependent ring dehydrogenation of precorrin-2 to yield sirohydrochlorin. Finally, it catalyzes the ferrochelation of sirohydrochlorin to yield siroheme. This Pseudomonas aeruginosa (strain ATCC 15692 / DSM 22644 / CIP 104116 / JCM 14847 / LMG 12228 / 1C / PRS 101 / PAO1) protein is Siroheme synthase.